A 100-amino-acid polypeptide reads, in one-letter code: Aspartyl/glutamyl-tRNA(Asn/Gln) amidotransferase subunit C (100 aa).

This sequence belongs to the GatC family. Heterotrimer of A, B and C subunits.

The catalysed reaction is L-glutamyl-tRNA(Gln) + L-glutamine + ATP + H2O = L-glutaminyl-tRNA(Gln) + L-glutamate + ADP + phosphate + H(+). The enzyme catalyses L-aspartyl-tRNA(Asn) + L-glutamine + ATP + H2O = L-asparaginyl-tRNA(Asn) + L-glutamate + ADP + phosphate + 2 H(+). Functionally, allows the formation of correctly charged Asn-tRNA(Asn) or Gln-tRNA(Gln) through the transamidation of misacylated Asp-tRNA(Asn) or Glu-tRNA(Gln) in organisms which lack either or both of asparaginyl-tRNA or glutaminyl-tRNA synthetases. The reaction takes place in the presence of glutamine and ATP through an activated phospho-Asp-tRNA(Asn) or phospho-Glu-tRNA(Gln). This chain is Aspartyl/glutamyl-tRNA(Asn/Gln) amidotransferase subunit C, found in Staphylococcus haemolyticus (strain JCSC1435).